The primary structure comprises 147 residues: Hemoglobin subunit epsilon-1 (147 aa).

A Globin domain is found at 3-147 (HFTAEEKAAI…VATALAHKYH (145 aa)). Positions 64 and 93 each coordinate heme b.

The protein belongs to the globin family. In terms of assembly, heterotetramer of two epsilon chains and two alpha chains. Red blood cells.

In terms of biological role, beta-type chain found in early embryos. This Capra hircus (Goat) protein is Hemoglobin subunit epsilon-1 (HBE1).